A 62-amino-acid polypeptide reads, in one-letter code: Conorfamide-Tx1 (62 aa).

Residues 1-19 (MSGRGFLLLALLLLVTVEA) form the signal peptide. The propeptide occupies 20-26 (TKVEKNK). Residue Y46 is modified to Tyrosine amide. Residues 47–62 (GRRDMQSPLLSERLRF) constitute a propeptide that is removed on maturation.

The protein belongs to the FARP (FMRFamide related peptide) family. As to expression, expressed by the venom duct.

It localises to the secreted. Its function is as follows. This peptide does not show activity on human and mouse sensory neuron-specific G-protein coupled receptors MRGPRX1. The protein is Conorfamide-Tx1 of Conus textile (Cloth-of-gold cone).